Consider the following 481-residue polypeptide: Argininosuccinate lyase (481 aa).

This sequence belongs to the lyase 1 family. Argininosuccinate lyase subfamily.

It is found in the cytoplasm. The enzyme catalyses 2-(N(omega)-L-arginino)succinate = fumarate + L-arginine. Its pathway is amino-acid biosynthesis; L-arginine biosynthesis; L-arginine from L-ornithine and carbamoyl phosphate: step 3/3. The chain is Argininosuccinate lyase from Methanococcus maripaludis (strain C5 / ATCC BAA-1333).